A 616-amino-acid chain; its full sequence is TAF6-like RNA polymerase II p300/CBP-associated factor-associated factor 65 kDa subunit 6L (616 aa).

2 disordered regions span residues 399–432 and 455–539; these read SLLLQESPPGGSSETGFGSGLPPPSGVAGPEDPS and FGTG…GTRD. Ser-494 and Ser-500 each carry phosphoserine. Asymmetric dimethylarginine is present on residues Arg-549, Arg-555, and Arg-587.

This sequence belongs to the TAF6 family. The PCAF complex is composed of a number of TBP-associated factors (TAFS), such as TAF5, TAF5L, TAF6, TAF6L, TAF9, TAF10 and TAF12, PCAF, and also PCAF-associated factors (PAFs), such as TADA2L/ADA2, TADA3L/ADA3 and SPT3. Component of the STAGA transcription coactivator-HAT complex, at least composed of SUPT3H, GCN5L2, TAF5L, TAF6L, SUPT7L, TADA3L, TAD1L, TAF10, TAF12, TRRAP and TAF9.

It is found in the nucleus. Functionally, functions as a component of the PCAF complex. The PCAF complex is capable of efficiently acetylating histones in a nucleosomal context. The PCAF complex could be considered as the human version of the yeast SAGA complex. With TAF5L, acts as an epigenetic regulator essential for somatic reprogramming. Regulates target genes through H3K9ac deposition and MYC recruitment which trigger MYC regulatory network to orchestrate gene expression programs to control embryonic stem cell state. Functions with MYC to activate target gene expression through RNA polymerase II pause release. This chain is TAF6-like RNA polymerase II p300/CBP-associated factor-associated factor 65 kDa subunit 6L, found in Mus musculus (Mouse).